The primary structure comprises 118 residues: Large ribosomal subunit protein uL18 (118 aa).

Belongs to the universal ribosomal protein uL18 family. In terms of assembly, part of the 50S ribosomal subunit; part of the 5S rRNA/L5/L18/L25 subcomplex. Contacts the 5S and 23S rRNAs.

This is one of the proteins that bind and probably mediate the attachment of the 5S RNA into the large ribosomal subunit, where it forms part of the central protuberance. The sequence is that of Large ribosomal subunit protein uL18 from Caulobacter sp. (strain K31).